A 154-amino-acid chain; its full sequence is Probable chemoreceptor glutamine deamidase CheD (154 aa).

This sequence belongs to the CheD family.

The enzyme catalyses L-glutaminyl-[protein] + H2O = L-glutamyl-[protein] + NH4(+). In terms of biological role, probably deamidates glutamine residues to glutamate on methyl-accepting chemotaxis receptors (MCPs), playing an important role in chemotaxis. This Methanococcus maripaludis (strain C6 / ATCC BAA-1332) protein is Probable chemoreceptor glutamine deamidase CheD.